The sequence spans 188 residues: UPF0340 protein SSU98_0310 (188 aa).

This sequence belongs to the UPF0340 family.

This is UPF0340 protein SSU98_0310 from Streptococcus suis (strain 98HAH33).